The primary structure comprises 68 residues: Conotoxin G1.9 (68 aa).

Residues 1–21 (MGMRMMFTVFLLVVLATTVVS) form the signal peptide. A propeptide spanning residues 22–44 (FTSRRGPKSRRGEPVPTTVINYG) is cleaved from the precursor. 2 disulfides stabilise this stretch: cysteine 46–cysteine 52 and cysteine 47–cysteine 61.

Belongs to the conotoxin A superfamily. Expressed by the venom duct.

The protein resides in the secreted. In terms of biological role, does not show activity on all the human nAChR subtypes studied. The chain is Conotoxin G1.9 from Conus geographus (Geography cone).